The sequence spans 350 residues: UDP-glucose 4-epimerase (350 aa).

Residues 13 to 15 (GYI), 34 to 38 (DNLCN), 67 to 68 (DI), Phe89, and Lys93 each bind NAD(+). 133–135 (SAT) lines the substrate pocket. Residue Tyr158 is the Proton acceptor of the active site. Lys162 and Tyr186 together coordinate NAD(+). Substrate is bound by residues 186–188 (YFN), 207–209 (NNL), 225–227 (SVY), Arg240, and 303–306 (RSGD).

The protein belongs to the NAD(P)-dependent epimerase/dehydratase family. In terms of assembly, homodimer. The cofactor is NAD(+).

It catalyses the reaction UDP-alpha-D-glucose = UDP-alpha-D-galactose. It carries out the reaction UDP-N-acetyl-alpha-D-glucosamine = UDP-N-acetyl-alpha-D-galactosamine. Its pathway is carbohydrate metabolism; galactose metabolism. Its function is as follows. Catalyzes two distinct but analogous reactions: the reversible epimerization of UDP-glucose to UDP-galactose and the reversible epimerization of UDP-N-acetylglucosamine to UDP-N-acetylgalactosamine. The reaction with UDP-Gal plays a critical role in the Leloir pathway of galactose catabolism in which galactose is converted to the glycolytic intermediate glucose 6-phosphate. It contributes to the catabolism of dietary galactose and enables the endogenous biosynthesis of both UDP-Gal and UDP-GalNAc when exogenous sources are limited. Both UDP-sugar interconversions are important in the synthesis of glycoproteins and glycolipids. The chain is UDP-glucose 4-epimerase (Gale) from Drosophila melanogaster (Fruit fly).